Reading from the N-terminus, the 146-residue chain is Meiotically up-regulated gene 96 protein (146 aa).

A helical membrane pass occupies residues 85–104 (LIRYSLILTCLVAILLSVLW).

It localises to the cytoplasm. The protein localises to the membrane. Functionally, has a role in meiosis. This is Meiotically up-regulated gene 96 protein (mug96) from Schizosaccharomyces pombe (strain 972 / ATCC 24843) (Fission yeast).